A 417-amino-acid polypeptide reads, in one-letter code: Cysteate synthase (417 aa).

Position 102 is an N6-(pyridoxal phosphate)lysine (K102). Positions 128 and 380 each coordinate pyridoxal 5'-phosphate.

Belongs to the threonine synthase family. Cysteate synthase subfamily. Homotrimer. The cofactor is pyridoxal 5'-phosphate.

It carries out the reaction O-phospho-L-serine + sulfite + H(+) = L-cysteate + phosphate. It functions in the pathway cofactor biosynthesis; coenzyme M biosynthesis. In terms of biological role, specifically catalyzes the beta-elimination of phosphate from L-phosphoserine and the beta-addition of sulfite to the dehydroalanine intermediate to produce L-cysteate. This is Cysteate synthase from Methanocella arvoryzae (strain DSM 22066 / NBRC 105507 / MRE50).